A 596-amino-acid chain; its full sequence is Neuroepithelial cell-transforming gene 1 protein (596 aa).

Met1 bears the N-acetylmethionine mark. The disordered stretch occupies residues 1-44 (MEPELAAQKQPRPRRRSRRASGLSTEGATGPSADTSGSELDGRC). A necessary for nuclear localization region spans residues 1-74 (MEPELAAQKQ…LKRKRREKDD (74 aa)). A Nuclear localization signal motif is present at residues 12 to 19 (RPRRRSRR). Phosphoserine is present on residues Ser21 and Ser32. Residues 22-38 (GLSTEGATGPSADTSGS) show a composition bias toward polar residues. Residues 66–72 (KRKRREK) carry the Nuclear localization signal motif. Ser100, Ser106, and Ser122 each carry phosphoserine. A disordered region spans residues 127–146 (GDHRSPASAQKFSSRSTVPT). Residues 133–145 (ASAQKFSSRSTVP) are compositionally biased toward polar residues. Residues 174 to 356 (RRQEAIYEMS…QGVLSDINLK (183 aa)) enclose the DH domain. The PH domain occupies 386-501 (VLLCHGELRS…WFNCIRAAIA (116 aa)). Phosphoserine is present on Ser508. The segment at 562-596 (MAEDSKSLKTHQTQPGIRRARDKALSGGKRKETLV) is disordered.

As to quaternary structure, interacts with RHOA in its GTP- and GDP-bound states, and with CDC42 in its GTP-bound state. Interacts with the PDZ 1 domain of BAIAP1. In terms of tissue distribution, widely expressed.

The protein resides in the cytoplasm. The protein localises to the nucleus. Acts as a guanine nucleotide exchange factor (GEF) for RhoA GTPase. May be involved in activation of the SAPK/JNK pathway Stimulates genotoxic stress-induced RHOB activity in breast cancer cells leading to their cell death. This chain is Neuroepithelial cell-transforming gene 1 protein (NET1), found in Homo sapiens (Human).